Here is a 250-residue protein sequence, read N- to C-terminus: Ubiquinone/menaquinone biosynthesis C-methyltransferase UbiE (250 aa).

S-adenosyl-L-methionine-binding positions include Ser73, Asp94, and 122 to 123 (NA).

It belongs to the class I-like SAM-binding methyltransferase superfamily. MenG/UbiE family.

It carries out the reaction a 2-demethylmenaquinol + S-adenosyl-L-methionine = a menaquinol + S-adenosyl-L-homocysteine + H(+). It catalyses the reaction a 2-methoxy-6-(all-trans-polyprenyl)benzene-1,4-diol + S-adenosyl-L-methionine = a 5-methoxy-2-methyl-3-(all-trans-polyprenyl)benzene-1,4-diol + S-adenosyl-L-homocysteine + H(+). It functions in the pathway quinol/quinone metabolism; menaquinone biosynthesis; menaquinol from 1,4-dihydroxy-2-naphthoate: step 2/2. The protein operates within cofactor biosynthesis; ubiquinone biosynthesis. Its function is as follows. Methyltransferase required for the conversion of demethylmenaquinol (DMKH2) to menaquinol (MKH2) and the conversion of 2-polyprenyl-6-methoxy-1,4-benzoquinol (DDMQH2) to 2-polyprenyl-3-methyl-6-methoxy-1,4-benzoquinol (DMQH2). In Legionella pneumophila (strain Paris), this protein is Ubiquinone/menaquinone biosynthesis C-methyltransferase UbiE.